The primary structure comprises 2061 residues: Putative PWWP domain-containing DNA repair factor 4 (2061 aa).

Disordered regions lie at residues 101-211, 382-408, 541-586, 668-694, 864-910, 1046-1072, 1159-1182, 1205-1383, 1521-1548, and 1602-1726; these read TNLG…SRAR, ALGR…RSSV, TPGT…GDGS, PATL…GDGS, PTPG…SERS, PGTM…GDRS, ALHG…RGDS, KAIA…RDDK, PGAL…DSSP, and KKGK…KLAN. Basic and acidic residues-rich tracts occupy residues 133–153 and 162–173; these read PRED…KREN and ESKRALRDDRSQ. The segment covering 397 to 408 has biased composition (polar residues); sequence TPGTLQGNRSSV. The span at 1051-1061 shows a compositional bias: polar residues; sequence GDSSTARTATA. A compositionally biased stretch (polar residues) spans 1364–1373; it reads DSSQVHTTIA. Residues 1639 to 1648 are compositionally biased toward basic and acidic residues; the sequence is LKEETQDSRP. Residues 1656-1665 are compositionally biased toward polar residues; that stretch reads PESSPFSGNI. The PWWP domain maps to 1756-1817; sequence RGTMVWFKFQ…KHLDCKEKEK (62 aa).

It belongs to the PWWP3A family.

The polypeptide is Putative PWWP domain-containing DNA repair factor 4 (Homo sapiens (Human)).